Consider the following 539-residue polypeptide: CTP synthase (539 aa).

The interval methionine 1–leucine 268 is amidoligase domain. Serine 15 provides a ligand contact to CTP. Serine 15 provides a ligand contact to UTP. Serine 16–isoleucine 21 lines the ATP pocket. L-glutamine is bound at residue tyrosine 56. ATP is bound at residue aspartate 73. Mg(2+) is bound by residues aspartate 73 and glutamate 143. CTP-binding positions include aspartate 150–glutamate 152, lysine 189–glutamine 194, and lysine 225. UTP-binding positions include lysine 189 to glutamine 194 and lysine 225. In terms of domain architecture, Glutamine amidotransferase type-1 spans threonine 294–lysine 536. Residue glycine 356 participates in L-glutamine binding. The active-site Nucleophile; for glutamine hydrolysis is cysteine 383. L-glutamine-binding positions include leucine 384–glutamine 387, glutamate 407, and arginine 464. Catalysis depends on residues histidine 509 and glutamate 511.

The protein belongs to the CTP synthase family. As to quaternary structure, homotetramer.

It carries out the reaction UTP + L-glutamine + ATP + H2O = CTP + L-glutamate + ADP + phosphate + 2 H(+). It catalyses the reaction L-glutamine + H2O = L-glutamate + NH4(+). The enzyme catalyses UTP + NH4(+) + ATP = CTP + ADP + phosphate + 2 H(+). The protein operates within pyrimidine metabolism; CTP biosynthesis via de novo pathway; CTP from UDP: step 2/2. Allosterically activated by GTP, when glutamine is the substrate; GTP has no effect on the reaction when ammonia is the substrate. The allosteric effector GTP functions by stabilizing the protein conformation that binds the tetrahedral intermediate(s) formed during glutamine hydrolysis. Inhibited by the product CTP, via allosteric rather than competitive inhibition. In terms of biological role, catalyzes the ATP-dependent amination of UTP to CTP with either L-glutamine or ammonia as the source of nitrogen. Regulates intracellular CTP levels through interactions with the four ribonucleotide triphosphates. This Porphyromonas gingivalis (strain ATCC 33277 / DSM 20709 / CIP 103683 / JCM 12257 / NCTC 11834 / 2561) protein is CTP synthase.